The sequence spans 262 residues: Acyl-[acyl-carrier-protein]--UDP-N-acetylglucosamine O-acyltransferase (262 aa).

This sequence belongs to the transferase hexapeptide repeat family. LpxA subfamily. As to quaternary structure, homotrimer.

It is found in the cytoplasm. It catalyses the reaction a (3R)-hydroxyacyl-[ACP] + UDP-N-acetyl-alpha-D-glucosamine = a UDP-3-O-[(3R)-3-hydroxyacyl]-N-acetyl-alpha-D-glucosamine + holo-[ACP]. Its pathway is glycolipid biosynthesis; lipid IV(A) biosynthesis; lipid IV(A) from (3R)-3-hydroxytetradecanoyl-[acyl-carrier-protein] and UDP-N-acetyl-alpha-D-glucosamine: step 1/6. Its function is as follows. Involved in the biosynthesis of lipid A, a phosphorylated glycolipid that anchors the lipopolysaccharide to the outer membrane of the cell. This chain is Acyl-[acyl-carrier-protein]--UDP-N-acetylglucosamine O-acyltransferase, found in Burkholderia orbicola (strain MC0-3).